A 21-amino-acid chain; its full sequence is Venom peptide Ocy4 (21 aa).

As to expression, expressed by the venom gland.

It is found in the secreted. The protein is Venom peptide Ocy4 of Opisthacanthus cayaporum (South American scorpion).